The chain runs to 200 residues: Probable GTP-binding protein EngB (200 aa).

Residues 26–200 (SIPEIAIAGR…IYEIAQCIKK (175 aa)) enclose the EngB-type G domain. Residues 34-41 (GRSNVGKS), 61-65 (GCTKQ), 80-83 (DLPG), 147-150 (TKID), and 179-181 (TSS) contribute to the GTP site. Mg(2+) is bound by residues S41 and T63.

Belongs to the TRAFAC class TrmE-Era-EngA-EngB-Septin-like GTPase superfamily. EngB GTPase family. Mg(2+) is required as a cofactor.

In terms of biological role, necessary for normal cell division and for the maintenance of normal septation. This is Probable GTP-binding protein EngB from Ehrlichia chaffeensis (strain ATCC CRL-10679 / Arkansas).